Reading from the N-terminus, the 240-residue chain is tRNA (guanine-N(1)-)-methyltransferase (240 aa).

Residues Gly110 and 130 to 135 (IGDYVL) contribute to the S-adenosyl-L-methionine site.

This sequence belongs to the RNA methyltransferase TrmD family. Homodimer.

It is found in the cytoplasm. The catalysed reaction is guanosine(37) in tRNA + S-adenosyl-L-methionine = N(1)-methylguanosine(37) in tRNA + S-adenosyl-L-homocysteine + H(+). Specifically methylates guanosine-37 in various tRNAs. The protein is tRNA (guanine-N(1)-)-methyltransferase of Macrococcus caseolyticus (strain JCSC5402) (Macrococcoides caseolyticum).